Here is a 482-residue protein sequence, read N- to C-terminus: uncharacterized protein (482 aa).

In terms of domain architecture, DWNN spans isoleucine 5–proline 79. Residues glycine 86–arginine 108 form a disordered region. The CCHC-type zinc finger occupies tyrosine 183 to threonine 200. The RING-type; degenerate zinc finger occupies cysteine 282 to histidine 322. 2 disordered regions span residues lysine 346 to valine 393 and glutamine 447 to asparagine 482. Over residues asparagine 451–serine 466 the composition is skewed to low complexity.

It is found in the nucleus. This is an uncharacterized protein from Schizosaccharomyces pombe (strain 972 / ATCC 24843) (Fission yeast).